The following is a 371-amino-acid chain: Deoxyhypusine synthase (371 aa).

Residues 112–116, 138–140, E144, and D245 contribute to the NAD(+) site; these read SNLVT and SAG. Position 143–144 (143–144) interacts with spermidine; it reads EE. D250 serves as a coordination point for spermidine. G291 contributes to the NAD(+) binding site. H296 contributes to the spermidine binding site. Residue 316 to 317 coordinates NAD(+); it reads TG. Residues 322-324 and 331-337 each bind spermidine; these read GSD and EAVSWGK. The active-site Nucleophile is K337. 350 to 351 is an NAD(+) binding site; it reads EA.

This sequence belongs to the deoxyhypusine synthase family. The cofactor is NAD(+).

The enzyme catalyses [eIF5A protein]-L-lysine + spermidine = [eIF5A protein]-deoxyhypusine + propane-1,3-diamine. It participates in protein modification; eIF5A hypusination. Functionally, catalyzes the NAD-dependent oxidative cleavage of spermidine and the subsequent transfer of the butylamine moiety of spermidine to the epsilon-amino group of a critical lysine residue of the eIF-5A precursor protein to form the intermediate deoxyhypusine residue. This is the first step of the post-translational modification of that lysine into an unusual amino acid residue named hypusine. Hypusination is unique to mature eIF-5A factor and is essential for its function. The protein is Deoxyhypusine synthase of Caenorhabditis elegans.